The chain runs to 129 residues: NADPH-dependent 7-cyano-7-deazaguanine reductase (129 aa).

Cysteine 43 (thioimide intermediate) is an active-site residue. Catalysis depends on aspartate 50, which acts as the Proton donor. Residues 65-67 (VEL) and 84-85 (HE) each bind substrate.

It belongs to the GTP cyclohydrolase I family. QueF type 1 subfamily.

Its subcellular location is the cytoplasm. The catalysed reaction is 7-aminomethyl-7-carbaguanine + 2 NADP(+) = 7-cyano-7-deazaguanine + 2 NADPH + 3 H(+). The protein operates within tRNA modification; tRNA-queuosine biosynthesis. In terms of biological role, catalyzes the NADPH-dependent reduction of 7-cyano-7-deazaguanine (preQ0) to 7-aminomethyl-7-deazaguanine (preQ1). The chain is NADPH-dependent 7-cyano-7-deazaguanine reductase from Aquifex aeolicus (strain VF5).